We begin with the raw amino-acid sequence, 32 residues long: Alpha-2-macroglobulin homolog (32 aa).

Residues 16-19 constitute a cross-link (isoglutamyl cysteine thioester (Cys-Gln)); sequence CGEQ.

Belongs to the protease inhibitor I39 (alpha-2-macroglobulin) family. As to quaternary structure, homodimer; disulfide-linked.

It localises to the secreted. Its function is as follows. Is able to inhibit all four classes of proteinases by a unique 'trapping' mechanism. This protein has a peptide stretch, called the 'bait region' which contains specific cleavage sites for different proteinases. When a proteinase cleaves the bait region, a conformational change is induced in the protein which traps the proteinase. The entrapped enzyme remains active against low molecular weight substrates (activity against high molecular weight substrates is greatly reduced). Following cleavage in the bait region a thioester bond is hydrolyzed and mediates the covalent binding of the protein to the proteinase. This Pacifastacus leniusculus (Signal crayfish) protein is Alpha-2-macroglobulin homolog.